The sequence spans 356 residues: Guanine nucleotide-binding protein alpha-15 subunit (356 aa).

A lipid anchor (N-myristoyl glycine) is attached at Gly2. Residue Cys5 is the site of S-palmitoyl cysteine attachment. Residues 33–356 (GNQKLLLLGT…GRNLRGTGME (324 aa)) form the G-alpha domain. The tract at residues 36–49 (KLLLLGTGECGKST) is G1 motif. GTP contacts are provided by residues 41–48 (GTGECGKS), 177–183 (LRIRIPT), 202–206 (DVGGQ), 271–274 (NKRD), and Ala328. Mg(2+) contacts are provided by Ser48 and Thr183. Residues 175-183 (DMLRIRIPT) form a G2 motif region. The tract at residues 198–207 (FRIYDVGGQR) is G3 motif. Residues 267 to 274 (ILFLNKRD) form a G4 motif region. The G5 motif stretch occupies residues 326–331 (TCATDT).

The protein belongs to the G-alpha family. In terms of assembly, g proteins are composed of 3 units; alpha, beta and gamma. The alpha chain contains the guanine nucleotide binding site.

In terms of biological role, guanine nucleotide-binding proteins (G proteins) are involved as modulators or transducers in various transmembrane signaling systems. The polypeptide is Guanine nucleotide-binding protein alpha-15 subunit (gpa-15) (Caenorhabditis elegans).